Here is a 149-residue protein sequence, read N- to C-terminus: Basic phospholipase A2 homolog MitTx-beta (149 aa).

The first 30 residues, 1 to 30 (MDKMNPAHLLVLAAVCVSLLGASSIPPQAL), serve as a signal peptide directing secretion. Disulfide bonds link cysteine 41–cysteine 100, cysteine 55–cysteine 148, cysteine 57–cysteine 73, cysteine 72–cysteine 130, cysteine 79–cysteine 123, cysteine 89–cysteine 116, and cysteine 109–cysteine 121.

This sequence belongs to the phospholipase A2 family. Group I subfamily. K49 sub-subfamily. In terms of assembly, heterodimer of an alpha (Kunitz-type) and a beta (phospholipase A2 homolog) chains; non-covalently-linked. As to expression, expressed by the venom gland.

The protein localises to the secreted. In terms of biological role, heterodimer: MitTx, a heteromeric complex between Kunitz- and phospholipase-A2-like proteins, potently, persistently and selectively activates rat and chicken acid-sensing ion channel ASIC1. Both alternatively spliced rat isoforms ASIC1a and ASIC1b are activated, with a higher potency for ASIC1a (EC(50)=9.4 nM) vs ASIC1b (EC(50)=23 nM). The rat ASIC3 subtype is also sensitive to the heterodimer, but with a lower potency (EC(50)=830 nM). On rat ASIC2a, the toxin shows a very weak activation, but produces a remarkable potentiation (&gt;100-fold) of protons when the extracellular pH drops below neutrality. Moderate and weak activations are also observed on the heterotrimers Asic1a-Asic2a and Asic1a-Asic3 (expressed in CHO cells), respectively. The binding sites of the beta subunit of MitTx and the spider psalmotoxin-1 toxin overlap, explaining why these toxins are mutually exclusive. In vivo, the heterodimer elicits robust pain-related behavior in mice by activation of ASIC1 channels on capsaicin-sensitive nerve fibers. Its function is as follows. Monomer: does not have phospholipase A2 activity but may maintain some lipid-binding character from its PLA2 lineage, which could aid in effecting neuronal depolarization. The chain is Basic phospholipase A2 homolog MitTx-beta from Micrurus tener tener (Texas coral snake).